We begin with the raw amino-acid sequence, 716 residues long: Polyribonucleotide nucleotidyltransferase (716 aa).

Asp495 and Asp501 together coordinate Mg(2+). In terms of domain architecture, KH spans 562 to 621 (PRLFRIQINPEQIGLVIGPGGKTIRSITEQTGAKIDIEDTGAVTISAVDADSALRAKSII). The S1 motif domain maps to 631 to 699 (GDVYIGKVTR…QKGRVNLTRK (69 aa)).

This sequence belongs to the polyribonucleotide nucleotidyltransferase family. It depends on Mg(2+) as a cofactor.

Its subcellular location is the cytoplasm. The catalysed reaction is RNA(n+1) + phosphate = RNA(n) + a ribonucleoside 5'-diphosphate. Functionally, involved in mRNA degradation. Catalyzes the phosphorolysis of single-stranded polyribonucleotides processively in the 3'- to 5'-direction. The protein is Polyribonucleotide nucleotidyltransferase of Synechococcus sp. (strain ATCC 27144 / PCC 6301 / SAUG 1402/1) (Anacystis nidulans).